The chain runs to 757 residues: E3 ubiquitin-protein ligase SMURF1 (757 aa).

The C2 domain maps to 1-120 (MSNPGTRRNG…TGYQRLDLCK (120 aa)). Positions 193 to 237 (GNCRFVESPSQDQRLQAQRLRNPDVRGSLQTPQNRPHGHQSPELP) are disordered. S200 is subject to Phosphoserine. WW domains follow at residues 234–267 (PELP…DPRI) and 306–339 (GPLP…DPRL). Residues K381 and K383 each participate in a glycyl lysine isopeptide (Lys-Gly) (interchain with G-Cter in ubiquitin) cross-link. The 338-residue stretch at 420–757 (RPKDLKKRLM…VEETCGFAVE (338 aa)) folds into the HECT domain. C725 functions as the Glycyl thioester intermediate in the catalytic mechanism.

In terms of assembly, interacts with TRAF4. Interacts (via HECT domain) with FBXL15 (via LRR repeats). Interacts with SMAD7 and TGFBR1; SMAD7 recruits SMURF1 to TGFBR1 and regulates TGF-beta receptor degradation. Interacts with MAVS; the interaction is mediated by NDFIP1. In terms of processing, auto-ubiquitinated in presence of NDFIP1. Ubiquitinated by the SCF(FBXL15) complex at Lys-381 and Lys-383, leading to its degradation by the proteasome. Lys-383 is the primary ubiquitination site. Expressed in melanocytes.

The protein localises to the cytoplasm. It localises to the cell membrane. It carries out the reaction S-ubiquitinyl-[E2 ubiquitin-conjugating enzyme]-L-cysteine + [acceptor protein]-L-lysine = [E2 ubiquitin-conjugating enzyme]-L-cysteine + N(6)-ubiquitinyl-[acceptor protein]-L-lysine.. The protein operates within protein modification; protein ubiquitination. E3 ubiquitin-protein ligase that acts as a negative regulator of BMP signaling pathway. Mediates ubiquitination and degradation of SMAD1 and SMAD5, 2 receptor-regulated SMADs specific for the BMP pathway. Promotes ubiquitination and subsequent proteasomal degradation of TRAF family members and RHOA. Promotes ubiquitination and subsequent proteasomal degradation of MAVS. Acts as an antagonist of TGF-beta signaling by ubiquitinating TGFBR1 and targeting it for degradation. Plays a role in dendrite formation by melanocytes. This Homo sapiens (Human) protein is E3 ubiquitin-protein ligase SMURF1 (SMURF1).